Reading from the N-terminus, the 120-residue chain is Large ribosomal subunit protein uL18 (120 aa).

This sequence belongs to the universal ribosomal protein uL18 family. Part of the 50S ribosomal subunit; part of the 5S rRNA/L5/L18/L25 subcomplex. Contacts the 5S and 23S rRNAs.

Functionally, this is one of the proteins that bind and probably mediate the attachment of the 5S RNA into the large ribosomal subunit, where it forms part of the central protuberance. The protein is Large ribosomal subunit protein uL18 of Halalkalibacterium halodurans (strain ATCC BAA-125 / DSM 18197 / FERM 7344 / JCM 9153 / C-125) (Bacillus halodurans).